Reading from the N-terminus, the 141-residue chain is 3-hydroxyacyl-[acyl-carrier-protein] dehydratase FabZ (141 aa).

H49 is an active-site residue.

The protein belongs to the thioester dehydratase family. FabZ subfamily.

It is found in the cytoplasm. The catalysed reaction is a (3R)-hydroxyacyl-[ACP] = a (2E)-enoyl-[ACP] + H2O. Functionally, involved in unsaturated fatty acids biosynthesis. Catalyzes the dehydration of short chain beta-hydroxyacyl-ACPs and long chain saturated and unsaturated beta-hydroxyacyl-ACPs. The protein is 3-hydroxyacyl-[acyl-carrier-protein] dehydratase FabZ (fabZ2) of Enterococcus faecalis (strain ATCC 700802 / V583).